Here is a 694-residue protein sequence, read N- to C-terminus: Elongation factor G (694 aa).

Residues 8–283 (ERYRNIGIMA…AVIDYLPAPV (276 aa)) form the tr-type G domain. GTP contacts are provided by residues 17–24 (AHIDAGKT), 81–85 (DTPGH), and 135–138 (NKMD).

The protein belongs to the TRAFAC class translation factor GTPase superfamily. Classic translation factor GTPase family. EF-G/EF-2 subfamily.

It is found in the cytoplasm. In terms of biological role, catalyzes the GTP-dependent ribosomal translocation step during translation elongation. During this step, the ribosome changes from the pre-translocational (PRE) to the post-translocational (POST) state as the newly formed A-site-bound peptidyl-tRNA and P-site-bound deacylated tRNA move to the P and E sites, respectively. Catalyzes the coordinated movement of the two tRNA molecules, the mRNA and conformational changes in the ribosome. In Paramagnetospirillum magneticum (strain ATCC 700264 / AMB-1) (Magnetospirillum magneticum), this protein is Elongation factor G.